Here is a 228-residue protein sequence, read N- to C-terminus: UPF0173 metal-dependent hydrolase Smar_0891 (228 aa).

This sequence belongs to the UPF0173 family.

The sequence is that of UPF0173 metal-dependent hydrolase Smar_0891 from Staphylothermus marinus (strain ATCC 43588 / DSM 3639 / JCM 9404 / F1).